The primary structure comprises 817 residues: tRNA(Met) cytidine acetyltransferase TmcA (817 aa).

ATP contacts are provided by residues Gln265, 289–298 (GRGKSVSVGI), and Arg439. The N-acetyltransferase domain occupies 469–664 (ELIRKMEVYL…YTAIVIKPIS (196 aa)). Acetyl-CoA is bound by residues 589–591 (IAT), 596–602 (MDLGLGS), Glu629, and Arg636.

It belongs to the RNA cytidine acetyltransferase family. TmcA subfamily.

The protein resides in the cytoplasm. It catalyses the reaction cytidine(34) in elongator tRNA(Met) + acetyl-CoA + ATP + H2O = N(4)-acetylcytidine(34) in elongator tRNA(Met) + ADP + phosphate + CoA + H(+). The enzyme catalyses a cytidine in RNA + acetyl-CoA + ATP + H2O = an N(4)-acetylcytidine in RNA + ADP + phosphate + CoA + H(+). The catalysed reaction is a cytidine in tRNA + acetyl-CoA + ATP + H2O = an N(4)-acetylcytidine in tRNA + ADP + phosphate + CoA + H(+). It carries out the reaction a cytidine in mRNA + acetyl-CoA + ATP + H2O = an N(4)-acetylcytidine in mRNA + ADP + phosphate + CoA + H(+). Functionally, catalyzes the formation of N(4)-acetylcytidine (ac(4)C) at the wobble position of tRNA(Met), by using acetyl-CoA as an acetyl donor and ATP (or GTP). In terms of biological role, catalyzes the formation of N(4)-acetylcytidine (ac(4)C) sites in rRNA, tRNA, mRNA and non-coding (nc) RNA, almost always on the middle C of a CCG motif. In hyperthermophiles more acetylation is seen at higher temperatures. This Pyrococcus abyssi (strain GE5 / Orsay) protein is tRNA(Met) cytidine acetyltransferase TmcA.